Reading from the N-terminus, the 101-residue chain is Nucleoid-associated protein Bind_0255 (101 aa).

The protein belongs to the YbaB/EbfC family. Homodimer.

Its subcellular location is the cytoplasm. The protein localises to the nucleoid. Binds to DNA and alters its conformation. May be involved in regulation of gene expression, nucleoid organization and DNA protection. The protein is Nucleoid-associated protein Bind_0255 of Beijerinckia indica subsp. indica (strain ATCC 9039 / DSM 1715 / NCIMB 8712).